Consider the following 249-residue polypeptide: tRNA pseudouridine synthase A (249 aa).

The active-site Nucleophile is aspartate 53. A substrate-binding site is contributed by tyrosine 111.

Belongs to the tRNA pseudouridine synthase TruA family. Homodimer.

It carries out the reaction uridine(38/39/40) in tRNA = pseudouridine(38/39/40) in tRNA. Functionally, formation of pseudouridine at positions 38, 39 and 40 in the anticodon stem and loop of transfer RNAs. In Streptococcus sanguinis (strain SK36), this protein is tRNA pseudouridine synthase A.